The primary structure comprises 543 residues: Probable ubiquitin-conjugating enzyme E2 26 (543 aa).

The segment at 1–21 is disordered; sequence MEPDVVEIPPPPLIASGSRTR. In terms of domain architecture, UBC core spans 271–431; the sequence is NWVKKVQADW…VFLLSLKTMV (161 aa). Cys-357 functions as the Glycyl thioester intermediate in the catalytic mechanism. The segment at 514–543 is disordered; that stretch reads LAEKPEPPMSNANTENQSKKKTRKRSRSSR. The segment covering 532–543 has biased composition (basic residues); it reads KKKTRKRSRSSR.

Belongs to the ubiquitin-conjugating enzyme family.

It catalyses the reaction S-ubiquitinyl-[E1 ubiquitin-activating enzyme]-L-cysteine + [E2 ubiquitin-conjugating enzyme]-L-cysteine = [E1 ubiquitin-activating enzyme]-L-cysteine + S-ubiquitinyl-[E2 ubiquitin-conjugating enzyme]-L-cysteine.. Its pathway is protein modification; protein ubiquitination. Functionally, accepts the ubiquitin from the E1 complex and catalyzes its covalent attachment to other proteins. The chain is Probable ubiquitin-conjugating enzyme E2 26 (UBC26) from Arabidopsis thaliana (Mouse-ear cress).